A 680-amino-acid polypeptide reads, in one-letter code: MAANPRKILVTCALPYANGSIHLGHMLEHVQADIWVRYQRLRGNEVHFICADDAHGTPIMLKAQQMGMEPEQMIEEVSKEHQADFAGFDISFDNYHSTHSDENRELASFVYTQLKDKGYITNRTISQLFDPEKEMFLPDRFVKGTCPKCKAEDQYGDNCDNCGETYSPTDLIDPKSAVSGATPIMKDSEHFFFDLPQFEDMLKAWTKSGALQTETSNKMQEWFESGLHQWDISRDAPYFGFEIPGETSKYFYVWLDAPIGYMGSFKNLCDKRDDLDFDEFWKKDSTTELYHFIGKDIVYFHSLFWPAMLEGAGFRKPNNVFVHGYVTVNGAKMSKSKGTFIKAGTYLEHLDPECLRYYYAAKLNSRIDDLDLNLEDFTQRVNSDVVNKIVNLASRNAGFITKRFDGKLSETFAEPELYAEFANAADRIAELYETREFSRAIREITALADKANQYIDEKAPWVVAKQEGKDQELQDICSVGINLFRVLITYLKPVMPLLTERTEAFLNETLTWEGVAQPLTNHEVTKFKALFTRIDPKHVEAMVEASKEDAAAAQVLIEAAKPTGPLIDEPIEAEIEFDDFAKVDMRIAKIISCEAVPKANKLLKFQLDIGGEMRQVFSGIKSAYTPEELVGKHTVMVANLKPRKMKFGMSEGMILAAGPGGKDLWILEPHEGAQPGMRVM.

A 'HIGH' region motif is present at residues Pro15–His25. Zn(2+) is bound by residues Cys146, Cys149, Cys159, and Cys162. A 'KMSKS' region motif is present at residues Lys332 to Ser336. Lys335 contacts ATP. The tRNA-binding domain occupies Asp579–Met680.

It belongs to the class-I aminoacyl-tRNA synthetase family. MetG type 1 subfamily. In terms of assembly, homodimer. It depends on Zn(2+) as a cofactor.

It is found in the cytoplasm. It catalyses the reaction tRNA(Met) + L-methionine + ATP = L-methionyl-tRNA(Met) + AMP + diphosphate. Its function is as follows. Is required not only for elongation of protein synthesis but also for the initiation of all mRNA translation through initiator tRNA(fMet) aminoacylation. The polypeptide is Methionine--tRNA ligase (Photobacterium profundum (strain SS9)).